We begin with the raw amino-acid sequence, 179 residues long: Large ribosomal subunit protein uL10 (179 aa).

This sequence belongs to the universal ribosomal protein uL10 family. As to quaternary structure, part of the ribosomal stalk of the 50S ribosomal subunit. The N-terminus interacts with L11 and the large rRNA to form the base of the stalk. The C-terminus forms an elongated spine to which L12 dimers bind in a sequential fashion forming a multimeric L10(L12)X complex.

Forms part of the ribosomal stalk, playing a central role in the interaction of the ribosome with GTP-bound translation factors. The protein is Large ribosomal subunit protein uL10 of Mycolicibacterium gilvum (strain PYR-GCK) (Mycobacterium gilvum (strain PYR-GCK)).